Here is a 182-residue protein sequence, read N- to C-terminus: Small ribosomal subunit protein uS4 (182 aa).

Disordered regions lie at residues 1-23 (MGHP…ADRI) and 158-182 (SSVA…KDEE). The 68-residue stretch at 103 to 170 (RRLQSLVFKR…AKQFETQETE (68 aa)) folds into the S4 RNA-binding domain. Residues 167–182 (QETEEVAAEEEPKDEE) are compositionally biased toward acidic residues.

It belongs to the universal ribosomal protein uS4 family. In terms of assembly, part of the 30S ribosomal subunit. Contacts protein S5. The interaction surface between S4 and S5 is involved in control of translational fidelity.

One of the primary rRNA binding proteins, it binds directly to 16S rRNA where it nucleates assembly of the body of the 30S subunit. Its function is as follows. With S5 and S12 plays an important role in translational accuracy. In Methanosphaera stadtmanae (strain ATCC 43021 / DSM 3091 / JCM 11832 / MCB-3), this protein is Small ribosomal subunit protein uS4.